The following is a 323-amino-acid chain: 8-oxo-dGDP phosphatase NUDT18 (323 aa).

Positions 37–167 (RLRKNVCYVV…DILHLVELAA (131 aa)) constitute a Nudix hydrolase domain. Leucine 58 contacts Mg(2+). Residues 76–97 (GRMEPGETIVEALQREVKEEAG) carry the Nudix box motif.

The protein belongs to the Nudix hydrolase family. Mn(2+) serves as cofactor. Mg(2+) is required as a cofactor.

The enzyme catalyses 8-oxo-dGDP + H2O = 8-oxo-dGMP + phosphate + H(+). It catalyses the reaction 8-oxo-dADP + H2O = 8-oxo-dAMP + phosphate + H(+). The catalysed reaction is 2-oxo-dADP + H2O = 2-oxo-dAMP + phosphate + H(+). It carries out the reaction 8-oxo-GDP + H2O = 8-oxo-GMP + phosphate + H(+). Functionally, mediates the hydrolysis of oxidized nucleoside diphosphate derivatives. Hydrolyzes 8-oxo-7,8-dihydroguanine (8-oxo-Gua)-containing deoxyribo- and ribonucleoside diphosphates to the monophosphates. Hydrolyzes 8-oxo-dGDP and 8-oxo-GDP with the same efficiencies. Also hydrolyzes 8-OH-dADP and 2-OH-dADP. Exhibited no or minimal hydrolysis activity against 8-oxo-dGTP, 8-oxo-GTP, dGTP, GTP, dGDP and GDP. Probably removes oxidized guanine nucleotides from both the DNA and RNA precursor pools. The polypeptide is 8-oxo-dGDP phosphatase NUDT18 (Homo sapiens (Human)).